We begin with the raw amino-acid sequence, 179 residues long: Large ribosomal subunit protein uL6 (179 aa).

The protein belongs to the universal ribosomal protein uL6 family. Part of the 50S ribosomal subunit.

Its function is as follows. This protein binds to the 23S rRNA, and is important in its secondary structure. It is located near the subunit interface in the base of the L7/L12 stalk, and near the tRNA binding site of the peptidyltransferase center. The chain is Large ribosomal subunit protein uL6 from Alkaliphilus oremlandii (strain OhILAs) (Clostridium oremlandii (strain OhILAs)).